A 756-amino-acid polypeptide reads, in one-letter code: Protease KEX1 (756 aa).

The first 24 residues, 1–24 (MILSSQLMLALIAVSGYGKAMQVP), serve as a signal peptide directing secretion. N-linked (GlcNAc...) asparagine glycosylation is found at asparagine 121, asparagine 144, and asparagine 152. The 311-residue stretch at 130–440 (QWHLINPNYP…FGKLDAYNIV (311 aa)) folds into the Peptidase S8 domain. Residues aspartate 164 and histidine 202 each act as charge relay system in the active site. Cystine bridges form between cysteine 218-cysteine 365 and cysteine 310-cysteine 340. Serine 373 serves as the catalytic Charge relay system. Residues asparagine 392 and asparagine 538 are each glycosylated (N-linked (GlcNAc...) asparagine). Residues 449–583 (VNPQGWLYLP…RLKMFGETID (135 aa)) form the P/Homo B domain. The interval 599 to 632 (AEVKSTESKTTTPTAQTSSFTTTSGEETSGANKL) is disordered. The segment covering 606–628 (SKTTTPTAQTSSFTTTSGEETSG) has biased composition (low complexity). The helical transmembrane segment at 641 to 661 (LYLAIFVIGAIVIIIYYLFFL) threads the bilayer. Residues 715–756 (EEELSPRESSSNNPFGNESLESFDNSPDHTSNLLGQNSIPNK) are disordered. The span at 721–756 (RESSSNNPFGNESLESFDNSPDHTSNLLGQNSIPNK) shows a compositional bias: polar residues.

This sequence belongs to the peptidase S8 family. Furin subfamily. Requires Ca(2+) as cofactor.

The protein resides in the membrane. Functionally, probably involved in the processing of the precursor of m1-toxin and alpha-factor. The chain is Protease KEX1 (KEX1) from Kluyveromyces lactis (strain ATCC 8585 / CBS 2359 / DSM 70799 / NBRC 1267 / NRRL Y-1140 / WM37) (Yeast).